A 144-amino-acid polypeptide reads, in one-letter code: Maximins 10/H15 (144 aa).

Residues 1 to 18 (MNFKYIVAVSFLIASAYA) form the signal peptide. Positions 19-43 (RSVQNDEQSLSQRDVLEEESLREIR) are excised as a propeptide. Residue Ser-70 is modified to Serine amide. Residues 74 to 123 (TAEDHEVMKRLEAVMRDLDSLDYPEEATERETRGFNQEEIANLFTKKEKR) constitute a propeptide that is removed on maturation. Leucine amide is present on Leu-143.

This sequence belongs to the bombinin family. As to expression, expressed by the skin glands.

The protein resides in the secreted. Its function is as follows. Maximin-10 shows antimicrobial activity against bacteria and against the fungus C.albicans. It has little hemolytic activity. In terms of biological role, maximin-H15 shows antimicrobial activity against bacteria and against the fungus C.albicans. Shows strong hemolytic activity. The chain is Maximins 10/H15 from Bombina maxima (Giant fire-bellied toad).